The primary structure comprises 928 residues: BCAS3 microtubule associated cell migration factor (928 aa).

Position 1 is an N-acetylmethionine (methionine 1). Lysine 215 participates in a covalent cross-link: Glycyl lysine isopeptide (Lys-Gly) (interchain with G-Cter in SUMO1); alternate. Lysine 215 participates in a covalent cross-link: Glycyl lysine isopeptide (Lys-Gly) (interchain with G-Cter in SUMO2); alternate. 2 required for recruitment to preautophagosomal structure in response to mitophagy regions span residues 254–312 (RGGA…SRRS) and 437–560 (YGGQ…IKAP). Residues serine 461, serine 480, and serine 488 each carry the phosphoserine modification. Disordered regions lie at residues 472–518 (TSKQ…PRLS) and 795–816 (VRSD…RGVS). Composition is skewed to low complexity over residues 480–494 (SPVP…GSPL) and 505–514 (NNFTNNNPGN). A phosphoserine mark is found at serine 838, serine 886, and serine 898. The segment at 868–928 (ESPSRDVVGS…PLSLFPTGFP (61 aa)) is disordered. The segment covering 887–901 (IETLSNSSGSTSGSI) has biased composition (low complexity).

Belongs to the BCAS3 family. As to quaternary structure, interacts with histone H3, ESR1, KAT2B and PELP1; the interactions occur in a estrogen-dependent manner. Interacts with beta-tubulin and VIM. Interacts (via C-terminal) with PHAF1; the interaction is requrired for the association with the phagophore. As to expression, expressed in blood islands and yolk sac blood islands (at protein level). Highly expressed in mammary tumors. Expressed in eostrogen-induced epithelial cells of mammary glands. Expressed in brain, heart, kidney, lung, liver and spleen. Expressed in embryonic stem cells, embryoid bodies, endothelial cells and fibroblasts.

It localises to the nucleus. The protein localises to the cytoplasm. Its subcellular location is the cytoskeleton. The protein resides in the preautophagosomal structure. Functionally, functions synergistically with PELP1 as a transcriptional coactivator of estrogen receptor-responsive genes. Stimulates histone acetyltransferase activity. Binds to chromatin. Plays a role in angiogenesis. Participates in the regulation of cell polarity and directional endothelial cell migration by mediating both the activation and recruitment of CDC42 and the reorganization of the actin cytoskeleton at the cell leading edge. Promotes filipodia formation. Plays a regulatory role in autophagic activity. In complex with PHAF1, associates with the preautophagosomal structure during both non-selective and selective autophagy. Probably binds phosphatidylinositol 3-phosphate (PtdIns3P) which would mediate the recruitment preautophagosomal structures. The polypeptide is BCAS3 microtubule associated cell migration factor (Mus musculus (Mouse)).